A 528-amino-acid polypeptide reads, in one-letter code: Pentatricopeptide repeat-containing protein At1g62914, mitochondrial (528 aa).

The transit peptide at methionine 1–arginine 20 directs the protein to the mitochondrion. 13 PPR repeats span residues serine 77–histidine 111, asparagine 112–proline 146, aspartate 147–proline 181, aspartate 182–proline 216, aspartate 217–alanine 251, asparagine 252–proline 286, asparagine 287–proline 321, asparagine 322–proline 356, asparagine 357–proline 391, asparagine 392–glycine 426, asparagine 427–proline 461, asparagine 462–proline 496, and aspartate 497–glutamate 528.

The protein belongs to the PPR family. P subfamily.

The protein localises to the mitochondrion. This chain is Pentatricopeptide repeat-containing protein At1g62914, mitochondrial, found in Arabidopsis thaliana (Mouse-ear cress).